The chain runs to 193 residues: Fe/S biogenesis protein NfuA (193 aa).

[4Fe-4S] cluster contacts are provided by Cys149 and Cys152.

The protein belongs to the NfuA family. As to quaternary structure, homodimer. [4Fe-4S] cluster serves as cofactor.

In terms of biological role, involved in iron-sulfur cluster biogenesis. Binds a 4Fe-4S cluster, can transfer this cluster to apoproteins, and thereby intervenes in the maturation of Fe/S proteins. Could also act as a scaffold/chaperone for damaged Fe/S proteins. The chain is Fe/S biogenesis protein NfuA from Psychromonas ingrahamii (strain DSM 17664 / CCUG 51855 / 37).